The primary structure comprises 368 residues: Zinc finger protein 24 (368 aa).

A Glycyl lysine isopeptide (Lys-Gly) (interchain with G-Cter in SUMO2) cross-link involves residue K22. A Glycyl lysine isopeptide (Lys-Gly) (interchain with G-Cter in SUMO1); alternate cross-link involves residue K27. A Glycyl lysine isopeptide (Lys-Gly) (interchain with G-Cter in SUMO2); alternate cross-link involves residue K27. The SCAN box domain occupies 52–134 (RQRFRQFGYQ…AVLEDLESEL (83 aa)). Residues S132 and S142 each carry the phosphoserine modification. Glycyl lysine isopeptide (Lys-Gly) (interchain with G-Cter in SUMO2) cross-links involve residues K147, K177, and K236. The C2H2-type 1 zinc-finger motif lies at 251-273 (HICDECGKHFSQGSALILHQRIH). The segment at 251–301 (HICDECGKHFSQGSALILHQRIHSGEKPYGCVECGKAFSRSSILVQHQRVH) is necessary and sufficient for nuclear localization. Residue S274 is modified to Phosphoserine. Residues K277 and K286 each participate in a glycyl lysine isopeptide (Lys-Gly) (interchain with G-Cter in SUMO2) cross-link. C2H2-type zinc fingers lie at residues 279 to 301 (YGCV…QRVH), 307 to 329 (YKCL…QRIH), and 335 to 357 (YECV…QRRH). S292 is subject to Phosphoserine. Y335 is subject to Phosphotyrosine. Glycyl lysine isopeptide (Lys-Gly) (interchain with G-Cter in SUMO2) cross-links involve residues K361 and K367.

This sequence belongs to the krueppel C2H2-type zinc-finger protein family. Post-translationally, sumoylated. As to expression, widely expressed with highest levels in heart, brain, liver, skeletal muscle, kidney and testis and very low levels in spleen and lung.

The protein localises to the nucleus. Functionally, transcription factor required for myelination of differentiated oligodendrocytes. Required for the conversion of oligodendrocytes from the premyelinating to the myelinating state. In the developing central nervous system (CNS), involved in the maintenance in the progenitor stage by promoting the cell cycle. Specifically binds to the 5'-TCAT-3' DNA sequence. Has transcription repressor activity in vitro. This chain is Zinc finger protein 24, found in Mus musculus (Mouse).